The chain runs to 298 residues: Riboflavin transporter (298 aa).

Helical transmembrane passes span 8–28, 35–55, 79–99, 101–121, 125–145, 151–171, 184–204, 211–231, and 258–278; these read LQGALWMLTAGLAFAIVNSVA, FGLPSTTVALVQYAIAIVVIL, VFLAVIGIQLWLWALAYPVPI, QGIALLMTSPLFATIGSGLWL, VGMARWVATLTGFIGAMIILE, FNLASLLPVGAAFFWASYSLM, MVVYLLLLITPFNLLLALPDW, TVWLLLIGAGVMTALAQWAIA, and WLVFGWVPPGRLWLGAAIIVL. 2 consecutive EamA domains span residues 10 to 144 and 156 to 284; these read GALW…MIIL and LLPV…AFIT.

It belongs to the drug/metabolite transporter (DMT) superfamily. 10 TMS drug/metabolite exporter (DME) (TC 2.A.7.3) family.

The protein resides in the cell membrane. Functionally, transports riboflavin into the cell. The chain is Riboflavin transporter from Vibrio cholerae serotype O1 (strain ATCC 39315 / El Tor Inaba N16961).